The following is a 66-amino-acid chain: Early E3 7.7 kDa protein (66 aa).

N-linked (GlcNAc...) asparagine; by host glycosylation is found at N7 and N24. The helical transmembrane segment at 44–64 (ITILIVIGILILSVILYFLFS) threads the bilayer.

The protein resides in the host nucleus membrane. This is Early E3 7.7 kDa protein from Human adenovirus B serotype 7 (HAdV-7).